The chain runs to 381 residues: Pentatricopeptide repeat-containing protein 2, mitochondrial (381 aa).

The PPR repeat unit spans residues 157–191 (DTTSFNITIDMLFNKQLYESGLEVVGEMKKQGVSL).

This sequence belongs to the PTCD2 family.

Its subcellular location is the mitochondrion. Functionally, involved in mitochondrial RNA maturation and mitochondrial respiratory chain function. The sequence is that of Pentatricopeptide repeat-containing protein 2, mitochondrial (ptcd2) from Danio rerio (Zebrafish).